A 381-amino-acid chain; its full sequence is Prolargin (381 aa).

The signal sequence occupies residues methionine 1–glycine 21. Residues alanine 19–proline 65 form a disordered region. A compositionally biased stretch (basic residues) spans arginine 25 to leucine 39. A compositionally biased stretch (pro residues) spans aspartate 56–proline 65. 12 LRR repeats span residues arginine 94 to isoleucine 113, threonine 114 to isoleucine 137, arginine 138 to leucine 161, glutamate 162 to isoleucine 182, serine 183 to leucine 206, serine 207 to leucine 232, arginine 233 to isoleucine 253, glutamate 254 to leucine 277, serine 278 to isoleucine 302, serine 303 to isoleucine 322, glutamate 323 to leucine 361, and lysine 362 to isoleucine 381. A glycan (N-linked (GlcNAc...) asparagine) is linked at asparagine 123. Residues asparagine 288, asparagine 319, and asparagine 326 are each glycosylated (N-linked (GlcNAc...) asparagine). Cysteine 331 and cysteine 372 are joined by a disulfide.

It belongs to the small leucine-rich proteoglycan (SLRP) family. SLRP class II subfamily. Binds the basement membrane heparan sulfate proteoglycan perlecan and triple helical collagens type I and type II. In terms of processing, glycosylated; contains heparan sulfate.

The protein resides in the secreted. It localises to the extracellular space. It is found in the extracellular matrix. May anchor basement membranes to the underlying connective tissue. In Bos taurus (Bovine), this protein is Prolargin (PRELP).